Here is a 334-residue protein sequence, read N- to C-terminus: WD repeat-containing protein 54 (334 aa).

WD repeat units follow at residues 162–206 (GHQM…TLLT), 208–247 (IPGFGVPCPSVQLWQGIIAAGYGNGQVHLYEATTGNLHVQ), and 250–289 (AHARAICALDLASEVGKLLSAGEDTFVHIWKLSRNPESGY).

Homodimer and homotrimer; forms tight forms of dimers and trimers. Interacts with IZUMO1 and IZUMO1R/JUNO. In terms of processing, cross-linked to tightly form both dimers and trimers by TGM2. Cross-linking enhances the activation of EGF receptor-mediated signaling pathway. Cross-linking is inhibited by EGF. Post-translationally, ubiquitinated. EGF increases ubiquitination. In terms of tissue distribution, expressed in epithelial cells (at protein level). Isoform 3 expression is highly increased in colorectal cancer cells.

The protein resides in the vesicle. The protein localises to the cytoplasm. It localises to the cell membrane. Its function is as follows. Plays a role in the adhesion and fusion of the sperm-oocyte membrane through its interactions with IZUMO1 and IZUMO1R/JUNO. When cross-linked to form dimers and trimers, it has a regulatory effect on ERK signaling pathway activity in response to EGF stimulation. Colocalizes with the EGF receptor in WDR54-specific vesicle where it sustains the internalization and controls the degradation of the EGF receptor after EGF stimulation. In Homo sapiens (Human), this protein is WD repeat-containing protein 54.